Reading from the N-terminus, the 84-residue chain is uncharacterized protein (84 aa).

Residues Ala7–Leu23 traverse the membrane as a helical segment.

The protein localises to the membrane. This is an uncharacterized protein from Haemophilus influenzae (strain ATCC 51907 / DSM 11121 / KW20 / Rd).